Reading from the N-terminus, the 76-residue chain is Defensin-like protein 122 (76 aa).

Positions 1 to 25 are cleaved as a signal peptide; sequence MSKTTVIAIFMVVLVLGLVTKETQG. Intrachain disulfides connect Cys29–Cys74, Cys39–Cys60, Cys44–Cys68, and Cys48–Cys70.

Belongs to the DEFL family. In terms of tissue distribution, expressed in flower buds, but not in stems, roots or rosette leaves.

It is found in the secreted. The polypeptide is Defensin-like protein 122 (LCR30) (Arabidopsis thaliana (Mouse-ear cress)).